Reading from the N-terminus, the 385-residue chain is Podocin (385 aa).

Basic and acidic residues predominate over residues Met-1–Ala-27. The disordered stretch occupies residues Met-1–Ala-64. Topologically, residues Met-1–Glu-104 are cytoplasmic. Cys-103 is lipidated: S-palmitoyl cysteine. A helical membrane pass occupies residues Trp-105–Phe-125. At Cys-126–Leu-385 the chain is on the extracellular side. A compositionally biased stretch (polar residues) spans Asn-357–Lys-370. The interval Asn-357–Leu-385 is disordered. Over residues Asn-376–Leu-385 the composition is skewed to basic and acidic residues.

The protein belongs to the band 7/mec-2 family. Interacts with nephrin/NPHS1, KIRRL1 and CD2AP. Interacts with DDN.

It is found in the membrane. Plays a role in the regulation of glomerular permeability, acting probably as a linker between the plasma membrane and the cytoskeleton. This is Podocin (Nphs2) from Mus musculus (Mouse).